The chain runs to 545 residues: Probable intron-encoded endonuclease 4 (545 aa).

The next 7 helical transmembrane spans lie at 1-21 (MYLS…FFGR), 30-50 (LITC…FFEV), 81-101 (LTVA…IYSI), 119-139 (LFTF…MFVG), 140-160 (WEGV…RIAA), 177-197 (FLTI…YATV), and 200-220 (LAPY…LIGA). Positions 1–239 (MYLSIIILPL…HVWLPMAMEG (239 aa)) are ndh-5 exons 1 and 2 encoded. The interval 240–545 (FFSRAFLKLH…NNINKSDYNK (306 aa)) is ndh-5 intron 2 encoded.

This sequence in the N-terminal section; belongs to the complex I subunit 5 family. It in the C-terminal section; belongs to the LAGLIDADG endonuclease family.

The protein resides in the mitochondrion membrane. Functionally, mitochondrial DNA endonuclease involved in intron homing. The sequence is that of Probable intron-encoded endonuclease 4 from Neurospora crassa (strain ATCC 24698 / 74-OR23-1A / CBS 708.71 / DSM 1257 / FGSC 987).